The sequence spans 152 residues: Globin, minor (152 aa).

Positions 12–152 (VNNSYHKDLL…ALIAVVQAAL (141 aa)) constitute a Globin domain. Position 104 (His104) interacts with heme b.

It belongs to the globin family.

The chain is Globin, minor from Anadara trapezia (Sydney cockle).